The following is a 314-amino-acid chain: Jacalin-related lectin 9 (314 aa).

A signal peptide spans 1-23 (MIFIYIFLFLSSAIIDSNGFAMA). 2 consecutive Jacalin-type lectin domains span residues 24–165 (QKLE…YLTK) and 168–313 (PTKS…YFSP).

The protein belongs to the jacalin lectin family.

In Arabidopsis thaliana (Mouse-ear cress), this protein is Jacalin-related lectin 9 (JAL9).